A 621-amino-acid polypeptide reads, in one-letter code: Solute carrier family 2, facilitated glucose transporter member 12 (621 aa).

The Cytoplasmic portion of the chain corresponds to 1–48 (MVPVENTEGPNLLNQKGTAVETEGSYRASGSRHPPWARGCGMFTFLSS). The chain crosses the membrane as a helical span at residues 49–69 (VTAAVSGLLVGYELGIISGAL). Residues 70–84 (LQIKTLLTLSCHEQE) are Extracellular-facing. The chain crosses the membrane as a helical span at residues 85–105 (MVVSSLLIGALLASLTGGVLI). Over 106 to 119 (DRYGRRTAIILSSC) the chain is Cytoplasmic. A helical membrane pass occupies residues 120–140 (LLGLGSLVLILSLSYTVLIVG). A topological domain (extracellular) is located at residue Arg141. A helical transmembrane segment spans residues 142 to 162 (IAIGVSISLSSIATCVYIAEI). The Cytoplasmic segment spans residues 163-176 (APQHRRGLLVSLNE). Residues 177 to 197 (LMIVIGILSAYISNYAFANVF) form a helical membrane-spanning segment. Residues 198–201 (HGWK) are Extracellular-facing. A helical transmembrane segment spans residues 202–222 (YMFGLVIPLGILQAIAMYFLP). Residues 223 to 282 (PSPRFLVMKGQEGAASKVLGRLRALSDATEELTVIKSSLKDEYQYSFWDLFRSKDNMRTR) lie on the Cytoplasmic side of the membrane. A helical transmembrane segment spans residues 283–303 (IMIGLTLVFFVQITGQPNILF). Residues 304–321 (YASTVLKSVGFQSNEAAS) lie on the Extracellular side of the membrane. A helical membrane pass occupies residues 322–342 (LASTGVGVVKVISTIPATLLV). Residues 343 to 349 (DHVGSKT) lie on the Cytoplasmic side of the membrane. The chain crosses the membrane as a helical span at residues 350–370 (FLCIGSSVMAASLVTMGIVNL). Residues 371-470 (NIHMNFTNIC…PAFLKWLSLA (100 aa)) lie on the Extracellular side of the membrane. 4 N-linked (GlcNAc...) asparagine glycosylation sites follow: Asn375, Asn387, Asn400, and Asn405. A helical transmembrane segment spans residues 471 to 491 (SLLVYVAAFSIGLGPMPWLVL). Residues 492 to 502 (SEIFPGGIRGR) are Cytoplasmic-facing. Residues 503–523 (AMALTSSMNWGINLLISLTFL) form a helical membrane-spanning segment. At 524–532 (TVTDLIGLP) the chain is on the extracellular side. The helical transmembrane segment at 533-553 (WVCFIYTIMSLASLLFVVMFI) threads the bilayer. The Cytoplasmic segment spans residues 554–621 (PETKGCSLEQ…GQSRQLSPEN (68 aa)).

This sequence belongs to the major facilitator superfamily. Sugar transporter (TC 2.A.1.1) family. Glucose transporter subfamily.

Its subcellular location is the cell membrane. The protein localises to the endomembrane system. The protein resides in the cytoplasm. It is found in the perinuclear region. It catalyses the reaction D-glucose(out) = D-glucose(in). Its function is as follows. Insulin-independent facilitative glucose transporter. The protein is Solute carrier family 2, facilitated glucose transporter member 12 of Macaca fascicularis (Crab-eating macaque).